Reading from the N-terminus, the 467-residue chain is Acyl-CoA-binding domain-containing protein 5 (467 aa).

The region spanning 8 to 97 (HQTRFEAAVS…MKKIIETMPV (90 aa)) is the ACB domain. An acyl-CoA is bound by residues 19–28 (IQSLPKNGSF), 39–43 (YSFYK), K65, and Y84. Disordered regions lie at residues 119-204 (KHGR…IVLN), 219-240 (TPLPTKCLSEPGDNVAIPEGEP), and 304-376 (ITEN…DRGP). Over residues 125 to 139 (GVTSELGSVLTSTPN) the composition is skewed to polar residues. Positions 170–187 (DEEDEEDETEHSEEEEKE) are enriched in acidic residues. 2 stretches are compositionally biased toward basic and acidic residues: residues 312–322 (ELKDGGEDGKQ) and 335–347 (KSEHFSSRRERSL). Gly residues predominate over residues 352 to 372 (GGEGSRSGQIGSSGDGDGWGS). Residues 382-411 (EQIAVVLMRLQEDMQNVLQRLHSLEVQTAS) adopt a coiled-coil conformation. A helical membrane pass occupies residues 439–459 (GTLALAVVWPFVVHWLMHVFL).

The protein belongs to the ATG37 family.

It localises to the peroxisome membrane. Its function is as follows. Acyl-CoA binding protein which acts as the peroxisome receptor for pexophagy but is dispensable for aggrephagy and nonselective autophagy. Binds medium- and long-chain acyl-CoA esters. The chain is Acyl-CoA-binding domain-containing protein 5 (acbd5) from Xenopus laevis (African clawed frog).